A 107-amino-acid polypeptide reads, in one-letter code: Holo-[acyl-carrier-protein] synthase (107 aa).

Residues aspartate 10 and glutamate 54 each contribute to the Mg(2+) site.

Belongs to the P-Pant transferase superfamily. AcpS family. Mg(2+) is required as a cofactor.

The protein resides in the cytoplasm. It catalyses the reaction apo-[ACP] + CoA = holo-[ACP] + adenosine 3',5'-bisphosphate + H(+). In terms of biological role, transfers the 4'-phosphopantetheine moiety from coenzyme A to a Ser of acyl-carrier-protein. This is Holo-[acyl-carrier-protein] synthase from Mycoplasma mobile (strain ATCC 43663 / 163K / NCTC 11711) (Mesomycoplasma mobile).